Reading from the N-terminus, the 494-residue chain is O-acetyltransferase ptmV (494 aa).

The segment at 181–203 (ESQQDSREKLRHSGGPPDPRFDH) is disordered.

Belongs to the fumigaclavine B O-acetyltransferase family. As to quaternary structure, monomer.

The protein operates within secondary metabolite biosynthesis. O-acetyltransferase; part of the gene cluster that mediates the biosynthesis of the indole diterpenes penitrems. The geranylgeranyl diphosphate (GGPP) synthase ptmG catalyzes the first step in penitrem biosynthesis via conversion of farnesyl pyrophosphate and isopentyl pyrophosphate into geranylgeranyl pyrophosphate (GGPP). Condensation of indole-3-glycerol phosphate with GGPP by the prenyl transferase ptmC then forms 3-geranylgeranylindole (3-GGI). Epoxidation by the FAD-dependent monooxygenase ptmM leads to a epoxidized-GGI that is substrate of the terpene cyclase ptmB for cyclization to yield paspaline. Paspaline is subsequently converted to 13-desoxypaxilline by the cytochrome P450 monooxygenase ptmP, the latter being then converted to paxilline by the cytochrome P450 monooxygenase ptmQ. Paxilline is converted to beta-paxitriol via C-10 ketoreduction by the short-chain dehydrogenase ptmH which can be monoprenylated at the C-20 by the indole diterpene prenyltransferase ptmD. A two-step elimination (acetylation and elimination) process performed by the O-acetyltransferase ptmV and ptmI leads to the production of the prenylated form of penijanthine. The FAD-linked oxidoreductase ptmO then converts the prenylated form of penijanthine into PC-M5 which is in turn transformed into PC-M4 by the aromatic dimethylallyltransferase ptmE. Five sequential oxidative transformations performed by the cytochrome P450 monooxygenases ptmK, ptmU, ptmL, ptmN and ptmJ yield the various penitrem compounds. PtmK, ptmU and ptmM are involved in the formation of the key bicyclic ring of penitrem C via the formation of the intermediates secopenitrem D and penitrem D. PtmL catalyzes the epoxidation of penitrem D and C to yield penitrem B and F, respectively. PtmJ catalyzes the last benzylic hydroxylation to convert penitrem B to prenitrem E and penitrem F to penitrem A. The protein is O-acetyltransferase ptmV of Penicillium ochrochloron.